We begin with the raw amino-acid sequence, 378 residues long: tRNA-specific 2-thiouridylase MnmA (378 aa).

ATP is bound by residues 14-21 (AMSGGVDS) and Leu-40. The Nucleophile role is filled by Cys-109. Residues Cys-109 and Cys-208 are joined by a disulfide bond. Gly-133 contributes to the ATP binding site. Residues 156–158 (KDQ) form an interaction with tRNA region. Residue Cys-208 is the Cysteine persulfide intermediate of the active site.

Belongs to the MnmA/TRMU family.

The protein localises to the cytoplasm. It catalyses the reaction S-sulfanyl-L-cysteinyl-[protein] + uridine(34) in tRNA + AH2 + ATP = 2-thiouridine(34) in tRNA + L-cysteinyl-[protein] + A + AMP + diphosphate + H(+). Catalyzes the 2-thiolation of uridine at the wobble position (U34) of tRNA, leading to the formation of s(2)U34. In Streptomyces griseus subsp. griseus (strain JCM 4626 / CBS 651.72 / NBRC 13350 / KCC S-0626 / ISP 5235), this protein is tRNA-specific 2-thiouridylase MnmA.